Reading from the N-terminus, the 591-residue chain is L-fucose isomerase (591 aa).

Residues E337 and D361 each act as proton acceptor in the active site. Mn(2+)-binding residues include E337, D361, and H528.

It belongs to the L-fucose isomerase family. In terms of assembly, homohexamer. Mn(2+) is required as a cofactor.

It localises to the cytoplasm. The catalysed reaction is L-fucose = L-fuculose. The protein operates within carbohydrate degradation; L-fucose degradation; L-lactaldehyde and glycerone phosphate from L-fucose: step 1/3. Functionally, converts the aldose L-fucose into the corresponding ketose L-fuculose. The protein is L-fucose isomerase of Escherichia coli (strain ATCC 8739 / DSM 1576 / NBRC 3972 / NCIMB 8545 / WDCM 00012 / Crooks).